A 561-amino-acid chain; its full sequence is DISARM protein DrmB (561 aa).

The protein localises to the cytoplasm. Its function is as follows. Component of antiviral defense system DISARM (defense island system associated with restriction-modification), composed of DrmE, DrmA, DrmB, DrmC and DrmMII. DISARM is probably a multi-gene restriction module, this subunit has an unknown function. Expression of DISARM in B.subtilis (strain BEST7003) confers resistance to phages Nf, phi29, phi105, phi3T, SPO1, SPR and SPP1. Protection is over 10(7)-fold against phi3T, 10(4)-10(5)-fold against Nf, phi29, phi105 and SPR, 100-fold against SPO1 and 10-fold against SPP1. DISARM does not interfere with phage adsorption, but instead interferes with (phi3T) DNA replication early in its cycle, preventing replication, circularization and lysogeny and probably causes phage DNA degradation (DNA is degraded in SPP1-infected cells). The sequence is that of DISARM protein DrmB from Bacillus paralicheniformis (strain ATCC 9945a / NCIMB 11709 / CD-2).